Here is a 227-residue protein sequence, read N- to C-terminus: tRNA (guanine-N(1)-)-methyltransferase (227 aa).

Residues Gly112 and 132–137 (LGDFVL) each bind S-adenosyl-L-methionine.

It belongs to the RNA methyltransferase TrmD family. Homodimer.

The protein localises to the cytoplasm. It catalyses the reaction guanosine(37) in tRNA + S-adenosyl-L-methionine = N(1)-methylguanosine(37) in tRNA + S-adenosyl-L-homocysteine + H(+). Its function is as follows. Specifically methylates guanosine-37 in various tRNAs. This chain is tRNA (guanine-N(1)-)-methyltransferase, found in Gloeobacter violaceus (strain ATCC 29082 / PCC 7421).